The following is a 441-amino-acid chain: Diuretic hormone receptor (441 aa).

N-linked (GlcNAc...) asparagine glycosylation is found at asparagine 99, asparagine 107, and asparagine 112. The chain crosses the membrane as a helical span at residues 135–158 (FVFFVGFCLSLVAIAVAIWIFLYF). Over 159–166 (KDLRCLRN) the chain is Cytoplasmic. The helical transmembrane segment at 167–187 (TIHTNLMATYICNDATWIISA) threads the bilayer. Over 188–194 (VVQEYVE) the chain is Extracellular. The helical transmembrane segment at 195-224 (NGGLCSVLAVLMHYFYLTNFFWMFVEGLYL) threads the bilayer. Residues 225-238 (FLLVVATFTGEKVK) lie on the Cytoplasmic side of the membrane. A helical membrane pass occupies residues 239–260 (LQIYIIIGWGIPGVIVVTWAII). Over 261-291 (KHLGKTAPDNAGESHPMVLLIKHCPWMAEDY) the chain is Extracellular. A helical membrane pass occupies residues 292 to 315 (FDWIHQAPVITVLAVNLVFLFSIM). Residues 316 to 338 (WVLITKLQSANTAETQQYRKATK) are Cytoplasmic-facing. A helical transmembrane segment spans residues 339-357 (ALLVLFPLLGITYILMMQG). Residues 358–371 (PMDGVAGHVFRNAQ) are Extracellular-facing. Residues 372 to 391 (ALLLSLQGFTVALFYCFLNT) form a helical membrane-spanning segment. Topologically, residues 392 to 441 (EVQNTLRHRMSRWRETRTVGGGRRYTLSGHSKDWSPRSRTESIRCLQHRS) are cytoplasmic.

It belongs to the G-protein coupled receptor 2 family. In terms of tissue distribution, expressed in Malpighian tubules.

It localises to the cell membrane. Functionally, receptor for the insect diurectic hormone. The activity of this receptor is mediated by G proteins which activate adenylyl cyclase. The polypeptide is Diuretic hormone receptor (Acheta domesticus (House cricket)).